The chain runs to 246 residues: Sugar fermentation stimulation protein homolog (246 aa).

The protein belongs to the SfsA family.

This chain is Sugar fermentation stimulation protein homolog, found in Prochlorococcus marinus (strain MIT 9215).